The primary structure comprises 228 residues: L-ribulose-5-phosphate 4-epimerase UlaF (228 aa).

Residues 26-27 (GN), 43-44 (SG), and 72-73 (SS) contribute to the substrate site. Zn(2+)-binding residues include D74, H93, and H95. D118 serves as the catalytic Proton donor/acceptor. Residue H167 coordinates Zn(2+). The Proton donor/acceptor role is filled by Y225.

It belongs to the aldolase class II family. AraD/FucA subfamily. Requires Zn(2+) as cofactor.

The catalysed reaction is L-ribulose 5-phosphate = D-xylulose 5-phosphate. It functions in the pathway cofactor degradation; L-ascorbate degradation; D-xylulose 5-phosphate from L-ascorbate: step 4/4. Its function is as follows. Catalyzes the isomerization of L-ribulose 5-phosphate to D-xylulose 5-phosphate. Is involved in the anaerobic L-ascorbate utilization. In Escherichia coli O8 (strain IAI1), this protein is L-ribulose-5-phosphate 4-epimerase UlaF.